A 264-amino-acid chain; its full sequence is Probable transcriptional regulatory protein PPA1157 (264 aa).

Belongs to the TACO1 family.

The protein resides in the cytoplasm. This Cutibacterium acnes (strain DSM 16379 / KPA171202) (Propionibacterium acnes) protein is Probable transcriptional regulatory protein PPA1157.